A 245-amino-acid chain; its full sequence is 1-(5-phosphoribosyl)-5-[(5-phosphoribosylamino)methylideneamino] imidazole-4-carboxamide isomerase (245 aa).

The Proton acceptor role is filled by Asp-11. Asp-132 serves as the catalytic Proton donor.

It belongs to the HisA/HisF family.

Its subcellular location is the cytoplasm. It catalyses the reaction 1-(5-phospho-beta-D-ribosyl)-5-[(5-phospho-beta-D-ribosylamino)methylideneamino]imidazole-4-carboxamide = 5-[(5-phospho-1-deoxy-D-ribulos-1-ylimino)methylamino]-1-(5-phospho-beta-D-ribosyl)imidazole-4-carboxamide. Its pathway is amino-acid biosynthesis; L-histidine biosynthesis; L-histidine from 5-phospho-alpha-D-ribose 1-diphosphate: step 4/9. This chain is 1-(5-phosphoribosyl)-5-[(5-phosphoribosylamino)methylideneamino] imidazole-4-carboxamide isomerase, found in Geobacillus thermodenitrificans (strain NG80-2).